A 266-amino-acid polypeptide reads, in one-letter code: Hydroxyacylglutathione hydrolase (266 aa).

7 residues coordinate Zn(2+): histidine 53, histidine 55, aspartate 57, histidine 58, histidine 118, aspartate 140, and histidine 178.

It belongs to the metallo-beta-lactamase superfamily. Glyoxalase II family. As to quaternary structure, monomer. Requires Zn(2+) as cofactor.

The catalysed reaction is an S-(2-hydroxyacyl)glutathione + H2O = a 2-hydroxy carboxylate + glutathione + H(+). Its pathway is secondary metabolite metabolism; methylglyoxal degradation; (R)-lactate from methylglyoxal: step 2/2. Functionally, thiolesterase that catalyzes the hydrolysis of S-D-lactoyl-glutathione to form glutathione and D-lactic acid. This is Hydroxyacylglutathione hydrolase from Cupriavidus metallidurans (strain ATCC 43123 / DSM 2839 / NBRC 102507 / CH34) (Ralstonia metallidurans).